A 214-amino-acid polypeptide reads, in one-letter code: Dimethylamine corrinoid protein 2 (214 aa).

One can recognise a B12-binding N-terminal domain in the interval 1 to 91; sequence MATKEELIQE…DMPAGAATKK (91 aa). The B12-binding domain occupies 92–214; it reads LGVIVNGTVE…AVAKAKELLL (123 aa). Position 105 (His-105) interacts with methylcob(III)alamin.

It belongs to the methylamine corrinoid protein family.

The protein operates within one-carbon metabolism; methanogenesis from dimethylamine. Functionally, acts as a methyl group carrier between MtbB and MtbA. This chain is Dimethylamine corrinoid protein 2 (mtbC2), found in Methanosarcina mazei (strain ATCC BAA-159 / DSM 3647 / Goe1 / Go1 / JCM 11833 / OCM 88) (Methanosarcina frisia).